The sequence spans 424 residues: Glutamyl-tRNA reductase (424 aa).

Substrate contacts are provided by residues 51 to 54 (TCNR), S99, 104 to 106 (EDQ), and Q110. Residue C52 is the Nucleophile of the active site. 179–184 (GGGEMG) lines the NADP(+) pocket.

This sequence belongs to the glutamyl-tRNA reductase family. Homodimer.

The enzyme catalyses (S)-4-amino-5-oxopentanoate + tRNA(Glu) + NADP(+) = L-glutamyl-tRNA(Glu) + NADPH + H(+). Its pathway is porphyrin-containing compound metabolism; protoporphyrin-IX biosynthesis; 5-aminolevulinate from L-glutamyl-tRNA(Glu): step 1/2. Its function is as follows. Catalyzes the NADPH-dependent reduction of glutamyl-tRNA(Glu) to glutamate 1-semialdehyde (GSA). The sequence is that of Glutamyl-tRNA reductase from Methanocorpusculum labreanum (strain ATCC 43576 / DSM 4855 / Z).